The primary structure comprises 259 residues: Dihydroorotate dehydrogenase B (NAD(+)), electron transfer subunit (259 aa).

Positions 2-102 constitute an FAD-binding FR-type domain; sequence MQKQNMIVVN…LGPLGHGFPL (101 aa). FAD-binding positions include 53-56, 70-72, and 77-78; these read RPIS, LYR, and GT. Positions 221, 226, 229, and 246 each coordinate [2Fe-2S] cluster.

This sequence belongs to the PyrK family. Heterotetramer of 2 PyrK and 2 PyrD type B subunits. [2Fe-2S] cluster serves as cofactor. FAD is required as a cofactor.

It functions in the pathway pyrimidine metabolism; UMP biosynthesis via de novo pathway; orotate from (S)-dihydroorotate (NAD(+) route): step 1/1. In terms of biological role, responsible for channeling the electrons from the oxidation of dihydroorotate from the FMN redox center in the PyrD type B subunit to the ultimate electron acceptor NAD(+). The protein is Dihydroorotate dehydrogenase B (NAD(+)), electron transfer subunit of Bacillus cereus (strain B4264).